The following is a 101-amino-acid chain: Small ribosomal subunit protein uS14 (101 aa).

This sequence belongs to the universal ribosomal protein uS14 family. In terms of assembly, part of the 30S ribosomal subunit. Contacts proteins S3 and S10.

Binds 16S rRNA, required for the assembly of 30S particles and may also be responsible for determining the conformation of the 16S rRNA at the A site. This is Small ribosomal subunit protein uS14 from Actinobacillus succinogenes (strain ATCC 55618 / DSM 22257 / CCUG 43843 / 130Z).